Here is a 406-residue protein sequence, read N- to C-terminus: Phosphoglycerate kinase (406 aa).

Residues 23-25, R38, 61-64, R117, and R157 each bind substrate; these read DIN and HQGR. ATP contacts are provided by residues E331 and 357-360; that span reads GGHI.

This sequence belongs to the phosphoglycerate kinase family. In terms of assembly, monomer.

The protein resides in the cytoplasm. The enzyme catalyses (2R)-3-phosphoglycerate + ATP = (2R)-3-phospho-glyceroyl phosphate + ADP. The protein operates within carbohydrate degradation; glycolysis; pyruvate from D-glyceraldehyde 3-phosphate: step 2/5. In Methanopyrus kandleri (strain AV19 / DSM 6324 / JCM 9639 / NBRC 100938), this protein is Phosphoglycerate kinase.